The sequence spans 238 residues: NEDD4-binding protein 2-like 1 (238 aa).

2 disordered regions span residues 1 to 36 (MEDS…PRRH) and 183 to 212 (VLHA…WNTY). The segment covering 20 to 31 (QPPPRPPPARGP) has biased composition (pro residues). Residues 192–212 (ANRNQGRNSEPSSGSGYWNTY) show a composition bias toward polar residues.

As to quaternary structure, interacts with dynactin subunit proteins, including DCTN4, DCTN5 and DCTN5.

Functionally, might play a role in adipocyte differentiation and triglyceride accumulation. This Mus musculus (Mouse) protein is NEDD4-binding protein 2-like 1 (N4bp2l1).